Consider the following 517-residue polypeptide: Steroid 17-alpha-hydroxylase/17,20 lyase (517 aa).

Cysteine 451 contacts heme.

Belongs to the cytochrome P450 family. Heme is required as a cofactor.

The protein localises to the membrane. The enzyme catalyses a C21-steroid + reduced [NADPH--hemoprotein reductase] + O2 = a 17alpha-hydroxy-C21-steroid + oxidized [NADPH--hemoprotein reductase] + H2O + H(+). It carries out the reaction 17alpha-hydroxyprogesterone + reduced [NADPH--hemoprotein reductase] + O2 = androst-4-ene-3,17-dione + acetate + oxidized [NADPH--hemoprotein reductase] + H2O + 2 H(+). It catalyses the reaction 17alpha-hydroxypregnenolone + reduced [NADPH--hemoprotein reductase] + O2 = 3beta-hydroxyandrost-5-en-17-one + acetate + oxidized [NADPH--hemoprotein reductase] + H2O + 2 H(+). It participates in lipid metabolism; steroid biosynthesis. Its function is as follows. Conversion of pregnenolone and progesterone to their 17-alpha-hydroxylated products and subsequently to dehydroepiandrosterone (DHEA) and androstenedione. Catalyzes both the 17-alpha-hydroxylation and the 17,20-lyase reaction. The sequence is that of Steroid 17-alpha-hydroxylase/17,20 lyase (cyp17a1) from Oryzias latipes (Japanese rice fish).